The sequence spans 374 residues: NAD-capped RNA hydrolase ndx-9 (374 aa).

Zn(2+) contacts are provided by Cys181, Cys184, Cys199, and Cys202. Residues Tyr207, 243–245 (AGF), Glu259, Glu263, and Glu307 each bind substrate. In terms of domain architecture, Nudix hydrolase spans 208–336 (PTFSPVSITL…LADPLLKNLP (129 aa)). The Mg(2+) site is built by Ala243, Glu259, Glu263, and Glu307. The Nudix box motif lies at 244-265 (GFAHSGESMAECARREIAEEVG). A Microbody targeting signal motif is present at residues 367-369 (LEN).

The protein belongs to the Nudix hydrolase family. NudC subfamily. In terms of assembly, homodimer. It depends on Mg(2+) as a cofactor. The cofactor is Mn(2+). Requires Zn(2+) as cofactor.

The catalysed reaction is a 5'-end NAD(+)-phospho-ribonucleoside in mRNA + H2O = a 5'-end phospho-adenosine-phospho-ribonucleoside in mRNA + beta-nicotinamide D-ribonucleotide + 2 H(+). It catalyses the reaction NAD(+) + H2O = beta-nicotinamide D-ribonucleotide + AMP + 2 H(+). The enzyme catalyses NADH + H2O = reduced beta-nicotinamide D-ribonucleotide + AMP + 2 H(+). In terms of biological role, mRNA decapping enzyme that specifically removes the nicotinamide adenine dinucleotide (NAD) cap from a subset of mRNAs by hydrolyzing the diphosphate linkage to produce nicotinamide mononucleotide (NMN) and 5' monophosphate mRNA. The NAD-cap is present at the 5'-end of some RNAs; in contrast to the canonical N7 methylguanosine (m7G) cap, the NAD cap promotes mRNA decay. Mediates the hydrolysis of some nucleoside diphosphate derivatives. The chain is NAD-capped RNA hydrolase ndx-9 (ndx-9) from Caenorhabditis elegans.